The chain runs to 68 residues: DNA-directed RNA polymerase subunit omega (68 aa).

It belongs to the RNA polymerase subunit omega family. As to quaternary structure, the RNAP catalytic core consists of 2 alpha, 1 beta, 1 beta' and 1 omega subunit. When a sigma factor is associated with the core the holoenzyme is formed, which can initiate transcription.

The enzyme catalyses RNA(n) + a ribonucleoside 5'-triphosphate = RNA(n+1) + diphosphate. Its function is as follows. Promotes RNA polymerase assembly. Latches the N- and C-terminal regions of the beta' subunit thereby facilitating its interaction with the beta and alpha subunits. The sequence is that of DNA-directed RNA polymerase subunit omega from Ruminiclostridium cellulolyticum (strain ATCC 35319 / DSM 5812 / JCM 6584 / H10) (Clostridium cellulolyticum).